A 212-amino-acid polypeptide reads, in one-letter code: 3-isopropylmalate dehydratase small subunit (212 aa).

Belongs to the LeuD family. LeuD type 1 subfamily. As to quaternary structure, heterodimer of LeuC and LeuD.

The catalysed reaction is (2R,3S)-3-isopropylmalate = (2S)-2-isopropylmalate. The protein operates within amino-acid biosynthesis; L-leucine biosynthesis; L-leucine from 3-methyl-2-oxobutanoate: step 2/4. In terms of biological role, catalyzes the isomerization between 2-isopropylmalate and 3-isopropylmalate, via the formation of 2-isopropylmaleate. The protein is 3-isopropylmalate dehydratase small subunit of Thioalkalivibrio sulfidiphilus (strain HL-EbGR7).